An 863-amino-acid chain; its full sequence is Bifunctional uridylyltransferase/uridylyl-removing enzyme (863 aa).

The segment at 1–328 (MLFSPTLSSP…PSNQDTVIDQ (328 aa)) is uridylyltransferase. The uridylyl-removing stretch occupies residues 329 to 687 (LDDDFQLINQ…ISNRFSLGGT (359 aa)). An HD domain is found at 446 to 568 (VDEHTLRVML…VQNQVRLDYL (123 aa)). ACT domains are found at residues 688–772 (EVFI…PNRQ) and 794–863 (QMEL…RNIG).

This sequence belongs to the GlnD family. The cofactor is Mg(2+).

The enzyme catalyses [protein-PII]-L-tyrosine + UTP = [protein-PII]-uridylyl-L-tyrosine + diphosphate. It carries out the reaction [protein-PII]-uridylyl-L-tyrosine + H2O = [protein-PII]-L-tyrosine + UMP + H(+). Uridylyltransferase (UTase) activity is inhibited by glutamine, while glutamine activates uridylyl-removing (UR) activity. In terms of biological role, modifies, by uridylylation and deuridylylation, the PII regulatory proteins (GlnB and homologs), in response to the nitrogen status of the cell that GlnD senses through the glutamine level. Under low glutamine levels, catalyzes the conversion of the PII proteins and UTP to PII-UMP and PPi, while under higher glutamine levels, GlnD hydrolyzes PII-UMP to PII and UMP (deuridylylation). Thus, controls uridylylation state and activity of the PII proteins, and plays an important role in the regulation of nitrogen assimilation and metabolism. The polypeptide is Bifunctional uridylyltransferase/uridylyl-removing enzyme (Haemophilus influenzae (strain 86-028NP)).